The primary structure comprises 335 residues: UPF0284 protein TON_0688 (335 aa).

The protein belongs to the UPF0284 family.

The chain is UPF0284 protein TON_0688 from Thermococcus onnurineus (strain NA1).